We begin with the raw amino-acid sequence, 87 residues long: SGAAAAQTAAASSLHQASNHTFYPWMAIAGESTADPIKSKIRSDLTQYGGISTDMGKRYSESLAGSLLPDWLGTNGLRRRGRQTYTR.

Residues 22–27 (FYPWMA) carry the Antp-type hexapeptide motif.

The protein belongs to the Antp homeobox family. In the embryo, expression is seen in the epidermis, somatic and visceral mesoderm, and the peripheral and central nervous system.

It is found in the nucleus. In terms of biological role, sequence-specific transcription factor which is part of a developmental regulatory system that provides cells with specific positional identities on the anterior-posterior axis. Binds the consensus region 5'-TTAAT[GT][GA]-3'. This homeotic protein controls development of the cells in the posterior thoracic and first abdominal segments. It activates the synthesis of the decapentaplegic (DPP) growth factor. The sequence is that of Homeotic protein ultrabithorax (Ubx) from Drosophila hydei (Fruit fly).